The chain runs to 340 residues: MQHVHPDDKTRSFYTGIGITLAIALVAGVLCKIPYLDIMGQLVLAIMIGMIWGHTIGLKNSHRSGVQFSSKKLLRAGIILLGLRLNLSAMYDAGLHAFLYAGLLLTVALVTVYSLARLFRVNKTLSILTACGTAICGAAAIVAIAPLVKAKESTTAVSVAVIAVLGTMFTLIYTMMYPFLPFTDYQYGIFAGGTLHEIAHAVAASTAGGEEAENIAIVVKLTRVALLVPVAILIGIYMKKREPQNNKQRFSLKTLPIPWFIFGFLAMSAVNTIGFLPESVVNLLISLAYLLLSMAMAGLGLNVEFQAFKKFGFHVFFAGLLGTLILIGCGFGLIYVMGLG.

The next 9 membrane-spanning stretches (helical) occupy residues 12-31 (SFYTGIGITLAIALVAGVLC), 36-58 (LDIMGQLVLAIMIGMIWGHTIGL), 94-116 (GLHAFLYAGLLLTVALVTVYSLA), 126-148 (SILTACGTAICGAAAIVAIAPLV), 155-177 (TAVSVAVIAVLGTMFTLIYTMMY), 215-237 (IAIVVKLTRVALLVPVAILIGIY), 257-276 (IPWFIFGFLAMSAVNTIGFL), 281-303 (VNLLISLAYLLLSMAMAGLGLNV), and 315-337 (VFFAGLLGTLILIGCGFGLIYVM).

This sequence belongs to the UPF0324 family.

The protein localises to the cell membrane. This is UPF0324 membrane protein OB3406 from Oceanobacillus iheyensis (strain DSM 14371 / CIP 107618 / JCM 11309 / KCTC 3954 / HTE831).